A 284-amino-acid polypeptide reads, in one-letter code: Bifunctional protein FolD (284 aa).

NADP(+)-binding positions include Gly-163 to Ser-165, Ser-188, and Ile-229.

This sequence belongs to the tetrahydrofolate dehydrogenase/cyclohydrolase family. As to quaternary structure, homodimer.

It carries out the reaction (6R)-5,10-methylene-5,6,7,8-tetrahydrofolate + NADP(+) = (6R)-5,10-methenyltetrahydrofolate + NADPH. The enzyme catalyses (6R)-5,10-methenyltetrahydrofolate + H2O = (6R)-10-formyltetrahydrofolate + H(+). It functions in the pathway one-carbon metabolism; tetrahydrofolate interconversion. Functionally, catalyzes the oxidation of 5,10-methylenetetrahydrofolate to 5,10-methenyltetrahydrofolate and then the hydrolysis of 5,10-methenyltetrahydrofolate to 10-formyltetrahydrofolate. The polypeptide is Bifunctional protein FolD (Campylobacter hominis (strain ATCC BAA-381 / DSM 21671 / CCUG 45161 / LMG 19568 / NCTC 13146 / CH001A)).